We begin with the raw amino-acid sequence, 238 residues long: Probable transcriptional regulatory protein llmg_0242 (238 aa).

The protein belongs to the TACO1 family. YeeN subfamily.

It localises to the cytoplasm. The chain is Probable transcriptional regulatory protein llmg_0242 from Lactococcus lactis subsp. cremoris (strain MG1363).